Reading from the N-terminus, the 343-residue chain is Holliday junction branch migration complex subunit RuvB (343 aa).

The segment at 1 to 23 (MSDDFEVVRPEEQAGDEKDRDLR) is disordered. The tract at residues 1–183 (MSDDFEVVRP…FGIVQRFEFY (183 aa)) is large ATPase domain (RuvB-L). ATP is bound by residues L22, R23, G64, K67, T68, T69, 130–132 (EDY), R173, Y183, and R220. Residue T68 coordinates Mg(2+). Residues 184 to 254 (SHEELASIIS…TVAAGLKQLN (71 aa)) are small ATPAse domain (RuvB-S). Residues 257-343 (GLGLETYDRQ…LGDGQEGLFD (87 aa)) are head domain (RuvB-H). Residues R312 and R317 each coordinate DNA.

The protein belongs to the RuvB family. In terms of assembly, homohexamer. Forms an RuvA(8)-RuvB(12)-Holliday junction (HJ) complex. HJ DNA is sandwiched between 2 RuvA tetramers; dsDNA enters through RuvA and exits via RuvB. An RuvB hexamer assembles on each DNA strand where it exits the tetramer. Each RuvB hexamer is contacted by two RuvA subunits (via domain III) on 2 adjacent RuvB subunits; this complex drives branch migration. In the full resolvosome a probable DNA-RuvA(4)-RuvB(12)-RuvC(2) complex forms which resolves the HJ.

Its subcellular location is the cytoplasm. It catalyses the reaction ATP + H2O = ADP + phosphate + H(+). Its function is as follows. The RuvA-RuvB-RuvC complex processes Holliday junction (HJ) DNA during genetic recombination and DNA repair, while the RuvA-RuvB complex plays an important role in the rescue of blocked DNA replication forks via replication fork reversal (RFR). RuvA specifically binds to HJ cruciform DNA, conferring on it an open structure. The RuvB hexamer acts as an ATP-dependent pump, pulling dsDNA into and through the RuvAB complex. RuvB forms 2 homohexamers on either side of HJ DNA bound by 1 or 2 RuvA tetramers; 4 subunits per hexamer contact DNA at a time. Coordinated motions by a converter formed by DNA-disengaged RuvB subunits stimulates ATP hydrolysis and nucleotide exchange. Immobilization of the converter enables RuvB to convert the ATP-contained energy into a lever motion, pulling 2 nucleotides of DNA out of the RuvA tetramer per ATP hydrolyzed, thus driving DNA branch migration. The RuvB motors rotate together with the DNA substrate, which together with the progressing nucleotide cycle form the mechanistic basis for DNA recombination by continuous HJ branch migration. Branch migration allows RuvC to scan DNA until it finds its consensus sequence, where it cleaves and resolves cruciform DNA. In Treponema denticola (strain ATCC 35405 / DSM 14222 / CIP 103919 / JCM 8153 / KCTC 15104), this protein is Holliday junction branch migration complex subunit RuvB.